A 309-amino-acid polypeptide reads, in one-letter code: MITFLPIIFSILIVVTFVIGNFANGFIALANSIEWFKRQKISFADQILTALAVPRVGLLWVLLLNWYATELNPAFYSIEVRITAYNLWAVINHFSNWLATSLSIFYLLKIANFSNLIFLRLKRRVKSVVLVILLGPLLFLVCHLFVINMNQIIWTKEYEGNMTWKIKLRSAMYLSNTTVTILANLVPFTVTLISFLLLVCSLCKHLKKMQLHGKGSQDPSTKVHIKALQTVISFLLLCAIYFVSVIISVWSFKNLENKPVFMFCQAIGFSCSSAHPFILIWGNKKLKQPFLSVLWQMRYWVKGEKPSSS.

Position 1 (M1) is a topological domain, extracellular. A helical transmembrane segment spans residues 2 to 22; the sequence is ITFLPIIFSILIVVTFVIGNF. Over 23 to 46 the chain is Cytoplasmic; it reads ANGFIALANSIEWFKRQKISFADQ. The chain crosses the membrane as a helical span at residues 47–67; the sequence is ILTALAVPRVGLLWVLLLNWY. At 68–86 the chain is on the extracellular side; sequence ATELNPAFYSIEVRITAYN. The helical transmembrane segment at 87–107 threads the bilayer; sequence LWAVINHFSNWLATSLSIFYL. Topologically, residues 108-126 are cytoplasmic; sequence LKIANFSNLIFLRLKRRVK. A helical membrane pass occupies residues 127–147; that stretch reads SVVLVILLGPLLFLVCHLFVI. The Extracellular portion of the chain corresponds to 148 to 178; it reads NMNQIIWTKEYEGNMTWKIKLRSAMYLSNTT. 2 N-linked (GlcNAc...) asparagine glycosylation sites follow: N161 and N176. Residues 179 to 199 traverse the membrane as a helical segment; that stretch reads VTILANLVPFTVTLISFLLLV. The Cytoplasmic segment spans residues 200–229; it reads CSLCKHLKKMQLHGKGSQDPSTKVHIKALQ. A helical membrane pass occupies residues 230 to 250; that stretch reads TVISFLLLCAIYFVSVIISVW. Residues 251–259 lie on the Extracellular side of the membrane; sequence SFKNLENKP. Residues 260 to 280 form a helical membrane-spanning segment; it reads VFMFCQAIGFSCSSAHPFILI. The Cytoplasmic portion of the chain corresponds to 281 to 309; it reads WGNKKLKQPFLSVLWQMRYWVKGEKPSSS.

The protein belongs to the G-protein coupled receptor T2R family.

It is found in the membrane. Receptor that may play a role in the perception of bitterness and is gustducin-linked. May play a role in sensing the chemical composition of the gastrointestinal content. The activity of this receptor may stimulate alpha gustducin, mediate PLC-beta-2 activation and lead to the gating of TRPM5. In Pan paniscus (Pygmy chimpanzee), this protein is Taste receptor type 2 member 66 (TAS2R66).